The chain runs to 626 residues: Phosphomethylpyrimidine synthase (626 aa).

A disordered region spans residues 1 to 22 (MTKQEKAINLSESAQVDQQSVQ). Positions 10–22 (LSESAQVDQQSVQ) are enriched in polar residues. Residues N232, M261, Y290, H326, 346-348 (SRG), 387-390 (DGLR), and E426 contribute to the substrate site. H430 is a Zn(2+) binding site. A substrate-binding site is contributed by Y453. Position 494 (H494) interacts with Zn(2+). Residues C574, C577, and C582 each coordinate [4Fe-4S] cluster.

The protein belongs to the ThiC family. As to quaternary structure, homodimer. The cofactor is [4Fe-4S] cluster.

It catalyses the reaction 5-amino-1-(5-phospho-beta-D-ribosyl)imidazole + S-adenosyl-L-methionine = 4-amino-2-methyl-5-(phosphooxymethyl)pyrimidine + CO + 5'-deoxyadenosine + formate + L-methionine + 3 H(+). It participates in cofactor biosynthesis; thiamine diphosphate biosynthesis. Its function is as follows. Catalyzes the synthesis of the hydroxymethylpyrimidine phosphate (HMP-P) moiety of thiamine from aminoimidazole ribotide (AIR) in a radical S-adenosyl-L-methionine (SAM)-dependent reaction. This is Phosphomethylpyrimidine synthase from Pseudomonas putida (strain GB-1).